The chain runs to 1014 residues: MRVPVFEDIKDETEEEKIGEEENEEDQVFYKPVIEDLSMELARKCTELISDIRYKEEFKKSKDKCTFVTDSPMLNHVKNIGAFISEAKYKGTIKADLSNSLYKRMPATIDSVFAGEVTQLQSEVAYKQKHDAAKGFSDYAHMKEPPEVKHAMEVNKHQSNISYRKDVQDTHTYSAELDRPDIKMATQISKIISNAEYKKGQGIMNKEPAVIGRPDFEHAVEASKLSSQIKYKEKFDNEMKDKKHHYNPLESASFRQNQLAATLASNVKYKKDIQNMHDPVSDLPNLLFLDHVLKASKMLSGREYKKLFEENKGMYHFDADAVEHLHHKGNAVLQSQVKYKEEYEKNKGKPMLEFVETPSYQASKEAQKMQSEKVYKEDFEKEIKGRSSLDLDKTPEFLHVKYITNLLREKEYKKDLENEIKGKGMELNSEVLDIQRAKRASEMASEKEYKKDLESIIKGKGMQAGTDTLEMQHAKKAAEIASEKDYKRDLETEIKGKGMQVSTDTLDVQRAKKASEMASQKQYKKDLENEIKGKGMQVSMDIPDILRAKRTSEIYSQRKYKDEAEKMLSNYSTIADTPEIQRIKTTQQNISAVFYKKEVGAGTAVKDSPEIERVKKNQQNISSVKYKEEIKHATAISDPPELKRVKENQKNISNLQYKEQNYKATPVSMTPEIERVRRNQEQLSAVKYKGELQRGTAISDPPELKRAKENQKNISNVYYRGQLGRATTLSVTPEMERVKKNQENISSVKYTQDHKQMKGRPSLILDTPAMRHVKEAQNHISMVKYHEDFEKTKGRGFTPVVDDPVTERVRKNTQVVSDAAYKGVHPHIVEMDRRPGIIVDLKVWRTDPGSIFDLDPLEDNIQSRSLHMLSEKASHYRRHWSRSHSSSTFGTGLGDDRSEISEIYPSFSCCSEVTRPSDEGAPVLPGAYQQSHSQGYGYMHQTSVSSMRSMQHSPNLRTYRAMYDYSAQDEDEVSFRDGDYIVNVQPIDDGWMYGTVQRTGRTGMLPANYIEFVN.

Residues 1-24 form a disordered region; sequence MRVPVFEDIKDETEEEKIGEEENE. Acidic residues predominate over residues 9–24; it reads IKDETEEEKIGEEENE. Nebulin repeat units lie at residues 29 to 63, 64 to 99, 100 to 136, 137 to 172, 173 to 205, 206 to 241, 242 to 278, 279 to 313, 314 to 348, 349 to 385, 386 to 422, 423 to 459, 460 to 496, 497 to 533, 534 to 569, 570 to 599, 600 to 635, 636 to 666, 667 to 693, 694 to 728, 729 to 759, 760 to 794, and 795 to 830; these read FYKP…KSKD, KCTF…DLSN, SLYK…AKGF, SDYA…DTHT, YSAE…GIMN, KEPA…EMKD, KKHH…NMHD, PVSD…ENKG, MYHF…KNKG, KPML…EIKG, RSSL…EIKG, KGME…IIKG, KGMQ…EIKG, KGMQ…KMLS, NYST…KKEV, GAGT…HATA, ISDP…KATP, VSMT…GELQ, RGTA…RATT, LSVT…QMKG, RPSL…KTKG, and RGFT…HIVE. Asp96 bears the Omega-N-methylarginine mark. Arg795 is modified (omega-N-methylarginine). The interval 836 to 953 is linker; it reads GIIVDLKVWR…VSSMRSMQHS (118 aa). An SH3 domain is found at 954-1014; that stretch reads PNLRTYRAMY…LPANYIEFVN (61 aa).

Interacts (via nebulin repeats 1-5) with DESM (via rod region). Interacts (via SH3 domain) with XIRP2. In terms of assembly, interacts with ZYX/Zyxin. As to expression, abundantly expressed in cardiac muscle, but not in skeletal or smooth muscle. Localized to Z-lines in cardiac cells and to dense bodies in nonmuscle cells. Isoform 2 is expressed in non-muscle cells such as in fibroblasts.

It is found in the cytoplasm. Its function is as follows. Binds to actin and plays an important role in the assembly of the Z-disk. May functionally link sarcomeric actin to the desmin intermediate filaments in the heart muscle sarcomeres. Functionally, may play a role in the assembly of focal adhesions. The sequence is that of Nebulette from Homo sapiens (Human).